We begin with the raw amino-acid sequence, 919 residues long: Envelope glycoprotein B (919 aa).

An N-terminal signal peptide occupies residues 1 to 28 (MSKDSTSLGVRTIVIACLVLLGCCIVEA). Over 29–788 (VPTTPSSQPS…SGIASFINNP (760 aa)) the chain is Virion surface. 5 cysteine pairs are disulfide-bonded: C81–C586, C98–C542, C172–C237, C330–C378, and C607–C647. An N-linked (GlcNAc...) asparagine; by host glycan is attached at N106. An involved in fusion and/or binding to host membrane region spans residues 138-144 (VWKGYSH). Residue N216 is glycosylated (N-linked (GlcNAc...) asparagine; by host). An involved in fusion and/or binding to host membrane region spans residues 223 to 231 (GWMPWRHYT). 7 N-linked (GlcNAc...) asparagine; by host glycosylation sites follow: N321, N364, N438, N456, N493, N496, and N499. N666 and N688 each carry an N-linked (GlcNAc...) asparagine; by host glycan. Hydrophobic membrane proximal region stretches follow at residues 733-786 (IDSV…SFIN) and 765-785 (TLVL…ASFI). The chain crosses the membrane as a helical span at residues 789-809 (FGGLAIGLLVIAGLVAAFFAY). At 810–919 (RYVMQLRSNP…DDPMESEKMV (110 aa)) the chain is on the intravirion side. Positions 864-867 (YMSM) match the Golgi targeting motif. Positions 900 to 919 (RGPKYTRLREDDPMESEKMV) are disordered. Residues 904–907 (YTRL) carry the Internalization motif motif. The span at 906 to 919 (RLREDDPMESEKMV) shows a compositional bias: basic and acidic residues.

The protein belongs to the herpesviridae glycoprotein B family. Homotrimer; disulfide-linked. Binds to heparan sulfate proteoglycans. Interacts with gH/gL heterodimer. A proteolytic cleavage by host furin generates two subunits that remain linked by disulfide bonds.

Its subcellular location is the virion membrane. The protein resides in the host cell membrane. The protein localises to the host endosome membrane. It is found in the host Golgi apparatus membrane. Functionally, envelope glycoprotein that forms spikes at the surface of virion envelope. Essential for the initial attachment to heparan sulfate moieties of the host cell surface proteoglycans. Involved in fusion of viral and cellular membranes leading to virus entry into the host cell. Following initial binding to its host receptors, membrane fusion is mediated by the fusion machinery composed at least of gB and the heterodimer gH/gL. May be involved in the fusion between the virion envelope and the outer nuclear membrane during virion egress. The protein is Envelope glycoprotein B of Equus caballus (Horse).